Consider the following 483-residue polypeptide: Cobyric acid synthase (483 aa).

A GATase cobBQ-type domain is found at 251–438; that stretch reads ALIVAVPMLP…LHGIFSADRF (188 aa). The Nucleophile role is filled by Cys333. His430 is a catalytic residue.

This sequence belongs to the CobB/CobQ family. CobQ subfamily.

The protein operates within cofactor biosynthesis; adenosylcobalamin biosynthesis. Its function is as follows. Catalyzes amidations at positions B, D, E, and G on adenosylcobyrinic A,C-diamide. NH(2) groups are provided by glutamine, and one molecule of ATP is hydrogenolyzed for each amidation. The sequence is that of Cobyric acid synthase from Brucella abortus (strain S19).